The chain runs to 156 residues: Flagellar assembly factor FliW (156 aa).

Belongs to the FliW family. Interacts with translational regulator CsrA and flagellin(s).

The protein localises to the cytoplasm. Functionally, acts as an anti-CsrA protein, binds CsrA and prevents it from repressing translation of its target genes, one of which is flagellin. Binds to flagellin and participates in the assembly of the flagellum. The polypeptide is Flagellar assembly factor FliW (Syntrophomonas wolfei subsp. wolfei (strain DSM 2245B / Goettingen)).